A 391-amino-acid chain; its full sequence is GTPase Obg (391 aa).

An Obg domain is found at 1–159 (MKFIDEALIR…RDLLLELMLL (159 aa)). The 174-residue stretch at 160 to 333 (ADVGMLGLPN…LTRDIMDFIE (174 aa)) folds into the OBG-type G domain. GTP is bound by residues 166–173 (GLPNAGKS), 191–195 (FTTLV), 213–216 (DIPG), 283–286 (NKID), and 314–316 (SAA). Positions 173 and 193 each coordinate Mg(2+).

The protein belongs to the TRAFAC class OBG-HflX-like GTPase superfamily. OBG GTPase family. Monomer. Mg(2+) is required as a cofactor.

It localises to the cytoplasm. An essential GTPase which binds GTP, GDP and possibly (p)ppGpp with moderate affinity, with high nucleotide exchange rates and a fairly low GTP hydrolysis rate. Plays a role in control of the cell cycle, stress response, ribosome biogenesis and in those bacteria that undergo differentiation, in morphogenesis control. This chain is GTPase Obg, found in Actinobacillus pleuropneumoniae serotype 5b (strain L20).